A 157-amino-acid chain; its full sequence is SsrA-binding protein (157 aa).

Residues 135–157 are disordered; that stretch reads KRDTIKDREGKREVERAMKTNHR.

This sequence belongs to the SmpB family.

Its subcellular location is the cytoplasm. Its function is as follows. Required for rescue of stalled ribosomes mediated by trans-translation. Binds to transfer-messenger RNA (tmRNA), required for stable association of tmRNA with ribosomes. tmRNA and SmpB together mimic tRNA shape, replacing the anticodon stem-loop with SmpB. tmRNA is encoded by the ssrA gene; the 2 termini fold to resemble tRNA(Ala) and it encodes a 'tag peptide', a short internal open reading frame. During trans-translation Ala-aminoacylated tmRNA acts like a tRNA, entering the A-site of stalled ribosomes, displacing the stalled mRNA. The ribosome then switches to translate the ORF on the tmRNA; the nascent peptide is terminated with the 'tag peptide' encoded by the tmRNA and targeted for degradation. The ribosome is freed to recommence translation, which seems to be the essential function of trans-translation. This Albidiferax ferrireducens (strain ATCC BAA-621 / DSM 15236 / T118) (Rhodoferax ferrireducens) protein is SsrA-binding protein.